Here is a 119-residue protein sequence, read N- to C-terminus: Immunoglobulin lambda variable 4-69 (119 aa).

Residues 1–20 (MAWTPLLFLTLLLHCTGSLS) form the signal peptide. The framework-1 stretch occupies residues 21-45 (QLVLTQSPSASASLGASVKLTCTLS). In terms of domain architecture, Ig-like spans 21–119 (QLVLTQSPSA…YYCQTWGTGI (99 aa)). A disulfide bond links cysteine 42 and cysteine 112. Residues 46–52 (SGHSSYA) are complementarity-determining-1. The tract at residues 53–69 (IAWHQQQPEKGPRYLMK) is framework-2. The complementarity-determining-2 stretch occupies residues 70–76 (LNSDGSH). A disordered region spans residues 73 to 92 (DGSHSKGDGIPDRFSGSSSG). The segment at 77–112 (SKGDGIPDRFSGSSSGAERYLTISSLQSEDEADYYC) is framework-3. Positions 113–119 (QTWGTGI) are complementarity-determining-3.

As to quaternary structure, immunoglobulins are composed of two identical heavy chains and two identical light chains; disulfide-linked.

The protein localises to the secreted. It localises to the cell membrane. In terms of biological role, v region of the variable domain of immunoglobulin light chains that participates in the antigen recognition. Immunoglobulins, also known as antibodies, are membrane-bound or secreted glycoproteins produced by B lymphocytes. In the recognition phase of humoral immunity, the membrane-bound immunoglobulins serve as receptors which, upon binding of a specific antigen, trigger the clonal expansion and differentiation of B lymphocytes into immunoglobulins-secreting plasma cells. Secreted immunoglobulins mediate the effector phase of humoral immunity, which results in the elimination of bound antigens. The antigen binding site is formed by the variable domain of one heavy chain, together with that of its associated light chain. Thus, each immunoglobulin has two antigen binding sites with remarkable affinity for a particular antigen. The variable domains are assembled by a process called V-(D)-J rearrangement and can then be subjected to somatic hypermutations which, after exposure to antigen and selection, allow affinity maturation for a particular antigen. The sequence is that of Immunoglobulin lambda variable 4-69 from Homo sapiens (Human).